The sequence spans 280 residues: uncharacterized protein (280 aa).

This is an uncharacterized protein from Acanthamoeba polyphaga mimivirus (APMV).